Here is a 98-residue protein sequence, read N- to C-terminus: C-X-C motif chemokine 10 (98 aa).

The signal sequence occupies residues 1–21 (MNQTAILICCLVFLTLSGIQG). The residue at position 26 (R26) is a Citrulline. Intrachain disulfides connect C30/C57 and C32/C74.

The protein belongs to the intercrine alpha (chemokine CxC) family.

The protein resides in the secreted. Its function is as follows. Chemotactic for monocytes and T-lymphocytes. Binds to CXCR3. The chain is C-X-C motif chemokine 10 (CXCL10) from Macaca nemestrina (Pig-tailed macaque).